Consider the following 415-residue polypeptide: Serine hydroxymethyltransferase (415 aa).

(6S)-5,6,7,8-tetrahydrofolate is bound by residues leucine 121 and glycine 125–leucine 127. An N6-(pyridoxal phosphate)lysine modification is found at lysine 230. Serine 355–phenylalanine 357 lines the (6S)-5,6,7,8-tetrahydrofolate pocket.

It belongs to the SHMT family. Homodimer. It depends on pyridoxal 5'-phosphate as a cofactor.

The protein localises to the cytoplasm. It catalyses the reaction (6R)-5,10-methylene-5,6,7,8-tetrahydrofolate + glycine + H2O = (6S)-5,6,7,8-tetrahydrofolate + L-serine. Its pathway is one-carbon metabolism; tetrahydrofolate interconversion. It participates in amino-acid biosynthesis; glycine biosynthesis; glycine from L-serine: step 1/1. Its function is as follows. Catalyzes the reversible interconversion of serine and glycine with tetrahydrofolate (THF) serving as the one-carbon carrier. This reaction serves as the major source of one-carbon groups required for the biosynthesis of purines, thymidylate, methionine, and other important biomolecules. Also exhibits THF-independent aldolase activity toward beta-hydroxyamino acids, producing glycine and aldehydes, via a retro-aldol mechanism. This is Serine hydroxymethyltransferase from Lactococcus lactis subsp. cremoris (strain MG1363).